Reading from the N-terminus, the 430-residue chain is Adenylosuccinate synthetase (430 aa).

GTP contacts are provided by residues 12-18 and 40-42; these read GDEGKGK and GHT. Catalysis depends on D13, which acts as the Proton acceptor. Residues D13 and G40 each coordinate Mg(2+). Residues 13-16, 38-41, T130, R144, Q224, T239, and R303 contribute to the IMP site; these read DEGK and NAGH. The active-site Proton donor is H41. A substrate-binding site is contributed by 299-305; it reads VNTGRKR. Residues R305, 331–333, and 413–415 contribute to the GTP site; these read KLD and STS.

It belongs to the adenylosuccinate synthetase family. As to quaternary structure, homodimer. Mg(2+) is required as a cofactor.

It is found in the cytoplasm. It carries out the reaction IMP + L-aspartate + GTP = N(6)-(1,2-dicarboxyethyl)-AMP + GDP + phosphate + 2 H(+). The protein operates within purine metabolism; AMP biosynthesis via de novo pathway; AMP from IMP: step 1/2. Functionally, plays an important role in the de novo pathway of purine nucleotide biosynthesis. Catalyzes the first committed step in the biosynthesis of AMP from IMP. The protein is Adenylosuccinate synthetase of Rhodopseudomonas palustris (strain BisA53).